The sequence spans 200 residues: NAD(P)H dehydrogenase (quinone) (200 aa).

The 187-residue stretch at 4–190 (VLVLYYSTYG…EGARFQGRHV (187 aa)) folds into the Flavodoxin-like domain. Residues 10–15 (STYGHV) and 78–80 (TRY) each bind FMN. Y12 is an NAD(+) binding site. Position 98 (W98) interacts with substrate. FMN contacts are provided by residues 113 to 119 (STASQHG) and H134.

The protein belongs to the WrbA family. The cofactor is FMN.

It catalyses the reaction a quinone + NADH + H(+) = a quinol + NAD(+). The catalysed reaction is a quinone + NADPH + H(+) = a quinol + NADP(+). This is NAD(P)H dehydrogenase (quinone) from Methylobacterium radiotolerans (strain ATCC 27329 / DSM 1819 / JCM 2831 / NBRC 15690 / NCIMB 10815 / 0-1).